The primary structure comprises 119 residues: Inner membrane protein YijD (119 aa).

The Cytoplasmic portion of the chain corresponds to Met-1 to Arg-8. Residues Gly-9–Leu-28 traverse the membrane as a helical segment. Over Phe-29–Ser-31 the chain is Periplasmic. The helical transmembrane segment at Ile-32–Leu-50 threads the bilayer. At His-51–Val-61 the chain is on the cytoplasmic side. A helical membrane pass occupies residues Gly-62–Ala-84. Residues Glu-85–Asp-88 are Periplasmic-facing. Residues Ile-89 to Ala-108 form a helical membrane-spanning segment. Residues Lys-109–Glu-119 lie on the Cytoplasmic side of the membrane.

The protein resides in the cell inner membrane. The chain is Inner membrane protein YijD (yijD) from Escherichia coli O6:H1 (strain CFT073 / ATCC 700928 / UPEC).